A 186-amino-acid chain; its full sequence is Adenylate kinase (186 aa).

ATP is bound at residue 10 to 15; the sequence is GSGKGT. The NMP stretch occupies residues 30–55; sequence ATGDVFRERMKTDMALRDIVSSGGYV. AMP-binding positions include threonine 31, arginine 36, 53-55, 81-84, and glutamine 88; these read GYV and GYPR. The tract at residues 122–132 is LID; sequence ARSKESGRTDD. Residue arginine 123 participates in ATP binding. Residues arginine 129 and arginine 140 each coordinate AMP. Lysine 168 is a binding site for ATP.

The protein belongs to the adenylate kinase family. Monomer.

It localises to the cytoplasm. It carries out the reaction AMP + ATP = 2 ADP. The protein operates within purine metabolism; AMP biosynthesis via salvage pathway; AMP from ADP: step 1/1. Its function is as follows. Catalyzes the reversible transfer of the terminal phosphate group between ATP and AMP. Plays an important role in cellular energy homeostasis and in adenine nucleotide metabolism. This chain is Adenylate kinase, found in Tropheryma whipplei (strain TW08/27) (Whipple's bacillus).